The primary structure comprises 28 residues: Palustrin-1a (28 aa).

A disulfide bond links cysteine 22 and cysteine 28.

As to expression, expressed by the skin glands.

It localises to the secreted. Its function is as follows. Antimicrobial activity against Gram-negative bacterium E.coli. This Lithobates palustris (Pickerel frog) protein is Palustrin-1a.